The sequence spans 161 residues: Small ribosomal subunit protein uS8m (161 aa).

This sequence belongs to the universal ribosomal protein uS8 family. As to quaternary structure, component of the mitochondrial small ribosomal subunit (mt-SSU). Mature N.crassa 74S mitochondrial ribosomes consist of a small (37S) and a large (54S) subunit. The 37S small subunit contains a 16S ribosomal RNA (16S mt-rRNA) and 32 different proteins. The 54S large subunit contains a 23S rRNA (23S mt-rRNA) and 42 different proteins.

The protein localises to the mitochondrion. Its function is as follows. Component of the mitochondrial ribosome (mitoribosome), a dedicated translation machinery responsible for the synthesis of mitochondrial genome-encoded proteins, including at least some of the essential transmembrane subunits of the mitochondrial respiratory chain. The mitoribosomes are attached to the mitochondrial inner membrane and translation products are cotranslationally integrated into the membrane. The chain is Small ribosomal subunit protein uS8m (mrps8) from Neurospora crassa (strain ATCC 24698 / 74-OR23-1A / CBS 708.71 / DSM 1257 / FGSC 987).